We begin with the raw amino-acid sequence, 465 residues long: Fumarate hydratase class II (465 aa).

Substrate contacts are provided by residues 100 to 102 (SGT), 131 to 134 (HPND), 141 to 143 (SSN), and T189. H190 serves as the catalytic Proton donor/acceptor. S320 is an active-site residue. Substrate-binding positions include S321 and 326–328 (KVN).

This sequence belongs to the class-II fumarase/aspartase family. Fumarase subfamily. As to quaternary structure, homotetramer.

Its subcellular location is the cytoplasm. The catalysed reaction is (S)-malate = fumarate + H2O. It participates in carbohydrate metabolism; tricarboxylic acid cycle; (S)-malate from fumarate: step 1/1. Its function is as follows. Involved in the TCA cycle. Catalyzes the stereospecific interconversion of fumarate to L-malate. This Mesorhizobium japonicum (strain LMG 29417 / CECT 9101 / MAFF 303099) (Mesorhizobium loti (strain MAFF 303099)) protein is Fumarate hydratase class II.